Reading from the N-terminus, the 220-residue chain is Protein Syd (220 aa).

Belongs to the Syd family.

Its subcellular location is the cell inner membrane. Interacts with the SecY protein in vivo. May bind preferentially to an uncomplexed state of SecY, thus functioning either as a chelating agent for excess SecY in the cell or as a regulatory factor that negatively controls the translocase function. This is Protein Syd from Shewanella loihica (strain ATCC BAA-1088 / PV-4).